The sequence spans 218 residues: 23 kDa integral membrane protein (218 aa).

Residues 1–12 (MATLGTGMRCLK) are Cytoplasmic-facing. The helical transmembrane segment at 13–36 (SCVFVLNIICLLCSLVLIGAGAYV) threads the bilayer. At 37-55 (EVKFSQYGDNLHKVWQAAP) the chain is on the extracellular side. Residues 56–71 (IAIIVVGVIILIVSFL) traverse the membrane as a helical segment. Topologically, residues 72–82 (GCCGAIKENVC) are cytoplasmic. The helical transmembrane segment at 83–108 (MLYMYAFFLVVLLIAELAAAIVAVVY) threads the bilayer. Residues 109-183 (KDRIDSEIDA…SVFGAFLKRN (75 aa)) lie on the Extracellular side of the membrane. An N-linked (GlcNAc...) asparagine glycan is attached at Asn165. A helical membrane pass occupies residues 184 to 205 (LVIVACVAFGVCFFQLLSIVIA). Residues 206–218 (CCLGRQIKEYENV) lie on the Cytoplasmic side of the membrane.

It belongs to the tetraspanin (TM4SF) family.

The protein resides in the membrane. This chain is 23 kDa integral membrane protein, found in Schistosoma mansoni (Blood fluke).